The primary structure comprises 381 residues: tRNA-specific 2-thiouridylase MnmA (381 aa).

ATP is bound by residues 9 to 16 (GMSGGVDS) and Met-35. Residues 95–97 (NPD) are interaction with target base in tRNA. Residue Cys-100 is the Nucleophile of the active site. The cysteines at positions 100 and 196 are disulfide-linked. Position 124 (Gly-124) interacts with ATP. The interval 146-148 (KDQ) is interaction with tRNA. The active-site Cysteine persulfide intermediate is the Cys-196. Residues 308–309 (RY) are interaction with tRNA.

It belongs to the MnmA/TRMU family.

It localises to the cytoplasm. The catalysed reaction is S-sulfanyl-L-cysteinyl-[protein] + uridine(34) in tRNA + AH2 + ATP = 2-thiouridine(34) in tRNA + L-cysteinyl-[protein] + A + AMP + diphosphate + H(+). In terms of biological role, catalyzes the 2-thiolation of uridine at the wobble position (U34) of tRNA, leading to the formation of s(2)U34. In Burkholderia multivorans (strain ATCC 17616 / 249), this protein is tRNA-specific 2-thiouridylase MnmA.